The chain runs to 485 residues: NADH-quinone oxidoreductase subunit N (485 aa).

The next 14 membrane-spanning stretches (helical) occupy residues 8–28 (LIALLPLLIVGLTVVVVMLSI), 35–55 (FLNATLSVIGLNAALVSLWFV), 71–91 (GFAMLYTGLVLLASLATCTFA), 105–125 (FYLLVLIAALGGILLANANHL), 127–147 (SLFLGIELISLPLFGLVGYAF), 159–179 (YTILSAAASSFLLFGMALVYA), 203–223 (LLAGFGLMIVGLGFKLSLVPF), 235–255 (PAPVSTFLATASKIAIFGVVM), 271–291 (VVLAIIAFASIIFGNLMALSQ), 297–317 (LLGYSSISHLGYLLVALIALQ), 326–346 (VGVYLVGYLFSSLGAFGVVSL), 373–393 (AAVMTVMMLSLAGIPMTLGFI), 408–430 (WWLVGAVVVGSAIGLYYYLRVAV), and 455–475 (IVVLISALLVLVLGVWPQPLI).

It belongs to the complex I subunit 2 family. In terms of assembly, NDH-1 is composed of 13 different subunits. Subunits NuoA, H, J, K, L, M, N constitute the membrane sector of the complex.

Its subcellular location is the cell inner membrane. It carries out the reaction a quinone + NADH + 5 H(+)(in) = a quinol + NAD(+) + 4 H(+)(out). In terms of biological role, NDH-1 shuttles electrons from NADH, via FMN and iron-sulfur (Fe-S) centers, to quinones in the respiratory chain. The immediate electron acceptor for the enzyme in this species is believed to be ubiquinone. Couples the redox reaction to proton translocation (for every two electrons transferred, four hydrogen ions are translocated across the cytoplasmic membrane), and thus conserves the redox energy in a proton gradient. The polypeptide is NADH-quinone oxidoreductase subunit N (Escherichia coli O6:K15:H31 (strain 536 / UPEC)).